A 248-amino-acid chain; its full sequence is UPF0273 protein APE_1505.1 (248 aa).

Positions 3-247 constitute a KaiC domain; the sequence is DRVKTGIPGM…VVRIGRRVSI (245 aa). 30–37 serves as a coordination point for ATP; the sequence is GGPGTGKS.

The protein belongs to the UPF0273 family.

The chain is UPF0273 protein APE_1505.1 from Aeropyrum pernix (strain ATCC 700893 / DSM 11879 / JCM 9820 / NBRC 100138 / K1).